Consider the following 293-residue polypeptide: Glycine N-methyltransferase (293 aa).

Val2 is subject to N-acetylvaline. (6S)-5-methyl-5,6,7,8-tetrahydrofolate is bound by residues Ser4 and Tyr6. At Ser10 the chain carries Phosphoserine. S-adenosyl-L-methionine contacts are provided by Tyr22, Trp31, Tyr34, and Arg41. Tyr34 is modified (phosphotyrosine). At Lys46 the chain carries N6-succinyllysine. S-adenosyl-L-methionine-binding positions include Ala65, 86–88 (DAS), 117–118 (NW), Leu137, 137–140 (LGNS), and Arg176. Residues Lys191, Lys196, and Lys201 each carry the N6-succinyllysine modification. His215 contacts (6S)-5-methyl-5,6,7,8-tetrahydrofolate. Position 221 (Tyr221) interacts with S-adenosyl-L-methionine. Arg240 is a binding site for (6S)-5-methyl-5,6,7,8-tetrahydrofolate.

Belongs to the class I-like SAM-binding methyltransferase superfamily. Glycine N-methyltransferase family. As to quaternary structure, homotetramer.

It localises to the cytoplasm. The enzyme catalyses glycine + S-adenosyl-L-methionine = sarcosine + S-adenosyl-L-homocysteine + H(+). With respect to regulation, inhibited by 5-methyltetrahydrofolate monoglutamate and by 5-methyltetrahydrofolate pentaglutamate, inhibition is much more effective by the pentaglutamate form than by the monoglutamate form. Two molecules of 5-methyltetrahydrofolate are bound per tetramer. The binding sites are localized between subunits. Inhibitor binding may preclude movements of the polypeptide chain that are necessary for enzyme activity. Functionally, catalyzes the methylation of glycine by using S-adenosylmethionine (AdoMet) to form N-methylglycine (sarcosine) with the concomitant production of S-adenosylhomocysteine (AdoHcy), a reaction regulated by the binding of 5-methyltetrahydrofolate. Plays an important role in the regulation of methyl group metabolism by regulating the ratio between S-adenosyl-L-methionine and S-adenosyl-L-homocysteine. This Mus musculus (Mouse) protein is Glycine N-methyltransferase (Gnmt).